The following is an 81-amino-acid chain: MQPLVIAAIVALVVAGIIAIVVWSIVFIEYRKIRRQRKIDKLIDRISERAEDSGNESEGDQEELSALVGMGHDAPWVINDL.

The Extracellular portion of the chain corresponds to 1-7 (MQPLVIA). Residues 8 to 28 (AIVALVVAGIIAIVVWSIVFI) form a helical membrane-spanning segment. Residues 29-81 (EYRKIRRQRKIDKLIDRISERAEDSGNESEGDQEELSALVGMGHDAPWVINDL) lie on the Cytoplasmic side of the membrane. Ser53 and Ser57 each carry phosphoserine; by host CK2.

It belongs to the HIV-1 VPU protein family. In terms of assembly, homopentamer. Interacts with host CD4 and BRTC; these interactions induce proteasomal degradation of CD4. Interacts with host BST2; this interaction leads to the degradation of host BST2. Interacts with host FBXW11. Interacts with host AP1M1; this interaction plays a role in the mistrafficking and subsequent degradation of host BST2. Interacts with host RANBP2; this interaction allows Vpu to down-regulate host BLM sumoylation. Post-translationally, phosphorylated by host CK2. This phosphorylation is necessary for interaction with human BTRC and degradation of CD4.

It is found in the host membrane. Ion channel activity is inhibited by hexamethylene amiloride in vitro. Its function is as follows. Enhances virion budding by targeting host CD4 and Tetherin/BST2 to proteasome degradation. Degradation of CD4 prevents any unwanted premature interactions between viral Env and its host receptor CD4 in the endoplasmic reticulum. Degradation of antiretroviral protein Tetherin/BST2 is important for virion budding, as BST2 tethers new viral particles to the host cell membrane. Mechanistically, Vpu bridges either CD4 or BST2 to BTRC, a substrate recognition subunit of the Skp1/Cullin/F-box protein E3 ubiquitin ligase, induces their ubiquitination and subsequent proteasomal degradation. The alteration of the E3 ligase specificity by Vpu seems to promote the degradation of host IKBKB, leading to NF-kappa-B down-regulation and subsequent apoptosis. Acts as a viroporin that forms an oligomeric ion channel in membranes. Modulates the host DNA repair mechanisms to promote degradation of nuclear viral cDNA in cells that are already productively infected in order to suppress immune sensing and proviral hyper-integration (superinfection). Manipulates PML-NBs and modulates SUMOylation of host BLM protein thereby enhancing its DNA-end processing activity toward viral unintegrated linear DNA. Also inhibits RAD52-mediated homologous repair of viral cDNA, preventing the generation of dead-end circular forms of single copies of the long terminal repeat and permitting sustained nucleolytic attack. This Homo sapiens (Human) protein is Protein Vpu.